Reading from the N-terminus, the 370-residue chain is tRNA N6-adenosine threonylcarbamoyltransferase (370 aa).

Residues H122 and H126 each contribute to the Fe cation site. Substrate contacts are provided by residues 153-157 (LLSGG), D186, G199, and N298. D326 lines the Fe cation pocket.

This sequence belongs to the KAE1 / TsaD family. It depends on Fe(2+) as a cofactor.

It is found in the cytoplasm. The enzyme catalyses L-threonylcarbamoyladenylate + adenosine(37) in tRNA = N(6)-L-threonylcarbamoyladenosine(37) in tRNA + AMP + H(+). Required for the formation of a threonylcarbamoyl group on adenosine at position 37 (t(6)A37) in tRNAs that read codons beginning with adenine. Is involved in the transfer of the threonylcarbamoyl moiety of threonylcarbamoyl-AMP (TC-AMP) to the N6 group of A37, together with TsaE and TsaB. TsaD likely plays a direct catalytic role in this reaction. This is tRNA N6-adenosine threonylcarbamoyltransferase from Granulibacter bethesdensis (strain ATCC BAA-1260 / CGDNIH1).